Consider the following 485-residue polypeptide: MTDIINLINDFGQSNPERVAVRHKDEELTYQQLMDESSKLAHLLQDNHKPLIVYGHMSPYMLVGMIGAIKAGCGYVPIDTSVPSERVNMIINKVQPDIIFNTSDTQLNHSNIQELTIQSIQDSDNPTLFDSQMGLTDVVYTIFTSGSTGEPKGVQIEYASLIEFAEWMVSLNESEGSQEWLNQAPFSFDLSVMAIYPCLTSGGTLNLVDKEMINKPKLLNEMLVNTPINAWVSTPSFMEMCLLLPNLNESSYPSLNHFFFCGEILPHRTAKALLDRYPSAVVYNTYGPTEATVAVTGIKLTPEVIEAYNPLPVGVSRPNTSLFTTDEGELVIKGNSVSLGYLDNKEKTDAVFNFEDGLRIYHTGDKAIEKDGQWFIQGRIDFQIKLNGYRMELEEIETQLRQSEFVRETVVVPVYKNNKVIHLIGAVVPTEEVRDDLEMTRQIKSELKSRLPEYMIPRKFVWMKQLPLTSNGKLDRKQVAEDINA.

Thr-144–Ser-145 is an ATP binding site. D-alanine is bound at residue Asp-189. Position 284–289 (Asn-284–Thr-289) interacts with ATP. Val-293 provides a ligand contact to D-alanine. 2 residues coordinate ATP: Asp-365 and Lys-473. Lys-473 contacts D-alanine.

It belongs to the ATP-dependent AMP-binding enzyme family. DltA subfamily.

It localises to the cytoplasm. The enzyme catalyses holo-[D-alanyl-carrier protein] + D-alanine + ATP = D-alanyl-[D-alanyl-carrier protein] + AMP + diphosphate. Its pathway is cell wall biogenesis; lipoteichoic acid biosynthesis. Functionally, catalyzes the first step in the D-alanylation of lipoteichoic acid (LTA), the activation of D-alanine and its transfer onto the D-alanyl carrier protein (Dcp) DltC. In an ATP-dependent two-step reaction, forms a high energy D-alanyl-AMP intermediate, followed by transfer of the D-alanyl residue as a thiol ester to the phosphopantheinyl prosthetic group of the Dcp. D-alanylation of LTA plays an important role in modulating the properties of the cell wall in Gram-positive bacteria, influencing the net charge of the cell wall. The polypeptide is D-alanine--D-alanyl carrier protein ligase (Staphylococcus haemolyticus (strain JCSC1435)).